A 394-amino-acid chain; its full sequence is Elongation factor Tu (394 aa).

A tr-type G domain is found at 10 to 204 (KPHINVGTIG…AMDNYIPIPE (195 aa)). A G1 region spans residues 19 to 26 (GHVDHGKT). 19–26 (GHVDHGKT) contributes to the GTP binding site. Threonine 26 serves as a coordination point for Mg(2+). The tract at residues 60–64 (GITIN) is G2. A G3 region spans residues 81 to 84 (DCPG). GTP-binding positions include 81–85 (DCPGH) and 136–139 (NKVD). The tract at residues 136–139 (NKVD) is G4. A G5 region spans residues 174 to 176 (SAL).

Belongs to the TRAFAC class translation factor GTPase superfamily. Classic translation factor GTPase family. EF-Tu/EF-1A subfamily. In terms of assembly, monomer.

The protein localises to the cytoplasm. It catalyses the reaction GTP + H2O = GDP + phosphate + H(+). In terms of biological role, GTP hydrolase that promotes the GTP-dependent binding of aminoacyl-tRNA to the A-site of ribosomes during protein biosynthesis. The protein is Elongation factor Tu of Methylacidiphilum infernorum (isolate V4) (Methylokorus infernorum (strain V4)).